The primary structure comprises 321 residues: tRNA-dihydrouridine synthase B (321 aa).

Residues 16–18 and Gln-70 each bind FMN; that span reads PMA. Residue Cys-100 is the Proton donor of the active site. FMN is bound by residues Lys-139, 200 to 202, and 224 to 225; these read NGD and GR.

The protein belongs to the Dus family. DusB subfamily. It depends on FMN as a cofactor.

It carries out the reaction a 5,6-dihydrouridine in tRNA + NAD(+) = a uridine in tRNA + NADH + H(+). The catalysed reaction is a 5,6-dihydrouridine in tRNA + NADP(+) = a uridine in tRNA + NADPH + H(+). In terms of biological role, catalyzes the synthesis of 5,6-dihydrouridine (D), a modified base found in the D-loop of most tRNAs, via the reduction of the C5-C6 double bond in target uridines. In Escherichia coli O157:H7, this protein is tRNA-dihydrouridine synthase B.